The sequence spans 172 residues: uncharacterized protein (172 aa).

The disordered stretch occupies residues 130–154; that stretch reads EQEKGAAPQEGKDWQVISEEDKKNQ.

This is an uncharacterized protein from Bacillus subtilis (strain 168).